The chain runs to 155 residues: Ribosomal RNA large subunit methyltransferase H (155 aa).

S-adenosyl-L-methionine contacts are provided by residues leucine 72, glycine 103, and 122-127; that span reads LSTMTL.

This sequence belongs to the RNA methyltransferase RlmH family. As to quaternary structure, homodimer.

The protein resides in the cytoplasm. It carries out the reaction pseudouridine(1915) in 23S rRNA + S-adenosyl-L-methionine = N(3)-methylpseudouridine(1915) in 23S rRNA + S-adenosyl-L-homocysteine + H(+). Specifically methylates the pseudouridine at position 1915 (m3Psi1915) in 23S rRNA. The sequence is that of Ribosomal RNA large subunit methyltransferase H from Nitrosomonas eutropha (strain DSM 101675 / C91 / Nm57).